Here is a 186-residue protein sequence, read N- to C-terminus: Methylamine dehydrogenase light chain (186 aa).

The tat-type signal signal peptide spans 1–57 (MLGKSQFDDLFEKMSRKVAGHTSRRGFIGRVGTAVAGVALVPLLPVDRRGRVSRANA). 6 disulfides stabilise this stretch: Cys78/Cys143, Cys84/Cys116, Cys91/Cys176, Cys93/Cys141, Cys101/Cys132, and Cys133/Cys164. Residue Trp112 is modified to Tryptophylquinone. The tryptophan tryptophylquinone (Trp-Trp) cross-link spans 112–163 (WVASCYNPTDKQSYLISYRDCCGANVSGRCACLNTEGELPVYRPEFGNDIIW).

This sequence belongs to the aromatic amine dehydrogenase light chain family. Heterotetramer of two light and two heavy chains. The cofactor is tryptophan tryptophylquinone residue. In terms of processing, predicted to be exported by the Tat system. The position of the signal peptide cleavage has been experimentally proven. Post-translationally, tryptophan tryptophylquinone (TTQ) is formed by oxidation of the indole ring of a tryptophan to form tryptophylquinone followed by covalent cross-linking with another tryptophan residue.

The protein resides in the periplasm. The enzyme catalyses 2 oxidized [amicyanin] + methylamine + H2O = 2 reduced [amicyanin] + formaldehyde + NH4(+) + 2 H(+). It participates in one-carbon metabolism; methylamine degradation; formaldehyde from methylamine: step 1/1. Functionally, methylamine dehydrogenase carries out the oxidation of methylamine. Electrons are passed from methylamine dehydrogenase to amicyanin. This is Methylamine dehydrogenase light chain (mauA) from Methylorubrum extorquens (strain ATCC 14718 / DSM 1338 / JCM 2805 / NCIMB 9133 / AM1) (Methylobacterium extorquens).